Here is a 469-residue protein sequence, read N- to C-terminus: Uronate isomerase (469 aa).

It belongs to the metallo-dependent hydrolases superfamily. Uronate isomerase family.

It catalyses the reaction D-glucuronate = D-fructuronate. It carries out the reaction aldehydo-D-galacturonate = keto-D-tagaturonate. It functions in the pathway carbohydrate metabolism; pentose and glucuronate interconversion. The protein is Uronate isomerase of Corynebacterium efficiens (strain DSM 44549 / YS-314 / AJ 12310 / JCM 11189 / NBRC 100395).